We begin with the raw amino-acid sequence, 362 residues long: Phosphoserine aminotransferase (362 aa).

Arg-43 serves as a coordination point for L-glutamate. Pyridoxal 5'-phosphate contacts are provided by residues 77–78 (AS), Trp-103, Thr-153, Asp-173, and Gln-196. N6-(pyridoxal phosphate)lysine is present on Lys-197. A pyridoxal 5'-phosphate-binding site is contributed by 238-239 (NT).

Belongs to the class-V pyridoxal-phosphate-dependent aminotransferase family. SerC subfamily. Homodimer. The cofactor is pyridoxal 5'-phosphate.

The protein localises to the cytoplasm. The catalysed reaction is O-phospho-L-serine + 2-oxoglutarate = 3-phosphooxypyruvate + L-glutamate. The enzyme catalyses 4-(phosphooxy)-L-threonine + 2-oxoglutarate = (R)-3-hydroxy-2-oxo-4-phosphooxybutanoate + L-glutamate. The protein operates within amino-acid biosynthesis; L-serine biosynthesis; L-serine from 3-phospho-D-glycerate: step 2/3. In terms of biological role, catalyzes the reversible conversion of 3-phosphohydroxypyruvate to phosphoserine and of 3-hydroxy-2-oxo-4-phosphonooxybutanoate to phosphohydroxythreonine. This Lysinibacillus sphaericus (strain C3-41) protein is Phosphoserine aminotransferase.